A 665-amino-acid polypeptide reads, in one-letter code: Fructose-1,6-bisphosphatase class 3 (665 aa).

Belongs to the FBPase class 3 family. Mn(2+) is required as a cofactor.

It carries out the reaction beta-D-fructose 1,6-bisphosphate + H2O = beta-D-fructose 6-phosphate + phosphate. It functions in the pathway carbohydrate biosynthesis; gluconeogenesis. The sequence is that of Fructose-1,6-bisphosphatase class 3 from Clostridium acetobutylicum (strain ATCC 824 / DSM 792 / JCM 1419 / IAM 19013 / LMG 5710 / NBRC 13948 / NRRL B-527 / VKM B-1787 / 2291 / W).